Here is a 457-residue protein sequence, read N- to C-terminus: BAG family molecular chaperone regulator 4 (457 aa).

Positions 1–101 (MSALRRSGYG…QPPYPSYNSN (101 aa)) are disordered. Serine 7 carries the phosphoserine modification. Over residues 8–20 (GYGPSDGPSYGRY) the composition is skewed to low complexity. Pro residues predominate over residues 30–47 (VHPPPPLYPLRPEPPQPP). Omega-N-methylarginine is present on residues arginine 40, arginine 53, and arginine 108. 3 disordered regions span residues 113–136 (YPSTYPVRPELQGQSLNSYTNGAY), 166–333 (STEV…DDSD), and 347–377 (LYGNATSDHPNNQDQSSSLPEECVPSDESTP). Over residues 166–182 (STEVPSTYRSSGNSPTP) the composition is skewed to polar residues. Arginine 185 bears the Omega-N-methylarginine mark. Composition is skewed to low complexity over residues 274-284 (STSPWPSSGSP) and 294-308 (QPKDSSYPYSQSDQS). Polar residues-rich tracts occupy residues 320–333 (QYESSGTVNNDDSD) and 347–365 (LYGNATSDHPNNQDQSSSL). The region spanning 379-456 (SIKKIIHVLE…AILEKLEKKG (78 aa)) is the BAG domain.

As to quaternary structure, binds to the ATPase domain of HSP/HSC70 chaperones. Binds to the death domain of TNFRSF1A in the absence of TNF and thereby prevents binding of adapter molecules such as TRADD or TRAF2. Binds to the death domain of TNFRSF12. Interacts with PRKN. Ubiquitous.

It localises to the cytoplasm. Its function is as follows. Inhibits the chaperone activity of HSP70/HSC70 by promoting substrate release. Prevents constitutive TNFRSF1A signaling. Negative regulator of PRKN translocation to damaged mitochondria. This chain is BAG family molecular chaperone regulator 4 (BAG4), found in Homo sapiens (Human).